Here is a 411-residue protein sequence, read N- to C-terminus: Adherens junction-associated protein 1 (411 aa).

Residues 1-43 form the signal peptide; the sequence is MWIQQLLGLSSMPIRWPGRSLGSHLWILIAMLQLAVDFPSCDS. Over 44-283 the chain is Extracellular; it reads LGPGPEFRLL…GETSGLAVHQ (240 aa). Low complexity-rich tracts occupy residues 62–76, 121–145, and 247–264; these read LWSL…LPTP, PPAA…AGAA, and TPVG…SNNG. Disordered regions lie at residues 62 to 156 and 242 to 270; these read LWSL…RGRR and DPWK…IQPP. A helical transmembrane segment spans residues 284-304; the sequence is IITITVSLIMVIAALITTLVL. Residues 304-411 form a targeting signals region; sequence LKNCCAPSGH…VSEKWFEISC (108 aa). Topologically, residues 305-411 are cytoplasmic; that stretch reads KNCCAPSGHT…VSEKWFEISC (107 aa).

In terms of assembly, forms a complex with CDH1 and CTNNB1; interacts directly with CTNNB1. Interacts with AP1M2 and with isoform 2 of BSG/CD147.

Its subcellular location is the basolateral cell membrane. The protein localises to the apical cell membrane. The protein resides in the cell junction. It localises to the adherens junction. Functionally, plays a role in cell adhesion and cell migration. This is Adherens junction-associated protein 1 (Ajap1) from Rattus norvegicus (Rat).